Reading from the N-terminus, the 154-residue chain is AP-1 complex subunit sigma-3 (154 aa).

The protein belongs to the adaptor complexes small subunit family. In terms of assembly, adaptor protein complex 1 (AP-1) is a heterotetramer composed of two large adaptins (gamma-type subunit AP1G1 and beta-type subunit AP1B1), a medium adaptin (mu-type subunit AP1M1 or AP1M2) and a small adaptin (sigma-type subunit AP1S1 or AP1S2 or AP1S3). As to expression, widely expressed.

Its subcellular location is the golgi apparatus. It localises to the cytoplasmic vesicle membrane. It is found in the membrane. The protein localises to the clathrin-coated pit. Functionally, subunit of clathrin-associated adaptor protein complex 1 that plays a role in protein sorting in the late-Golgi/trans-Golgi network (TGN) and/or endosomes. The AP complexes mediate both the recruitment of clathrin to membranes and the recognition of sorting signals within the cytosolic tails of transmembrane cargo molecules. Involved in TLR3 trafficking. This chain is AP-1 complex subunit sigma-3 (AP1S3), found in Homo sapiens (Human).